The following is a 363-amino-acid chain: Spermidine/putrescine import ATP-binding protein PotA 2 (363 aa).

Residues leucine 6–isoleucine 236 enclose the ABC transporter domain. Position 38-45 (glycine 38–threonine 45) interacts with ATP.

This sequence belongs to the ABC transporter superfamily. Spermidine/putrescine importer (TC 3.A.1.11.1) family. The complex is composed of two ATP-binding proteins (PotA), two transmembrane proteins (PotB and PotC) and a solute-binding protein (PotD).

It is found in the cell inner membrane. It carries out the reaction ATP + H2O + polyamine-[polyamine-binding protein]Side 1 = ADP + phosphate + polyamineSide 2 + [polyamine-binding protein]Side 1.. In terms of biological role, part of the ABC transporter complex PotABCD involved in spermidine/putrescine import. Responsible for energy coupling to the transport system. This is Spermidine/putrescine import ATP-binding protein PotA 2 from Pseudomonas aeruginosa (strain ATCC 15692 / DSM 22644 / CIP 104116 / JCM 14847 / LMG 12228 / 1C / PRS 101 / PAO1).